The primary structure comprises 237 residues: Ribosomal RNA small subunit methyltransferase G (237 aa).

Residues glycine 78, phenylalanine 83, 129-130, and arginine 148 contribute to the S-adenosyl-L-methionine site; that span reads AE.

It belongs to the methyltransferase superfamily. RNA methyltransferase RsmG family.

The protein resides in the cytoplasm. Specifically methylates the N7 position of a guanine in 16S rRNA. This Streptococcus pyogenes serotype M49 (strain NZ131) protein is Ribosomal RNA small subunit methyltransferase G.